The following is a 207-amino-acid chain: A disintegrin and metalloproteinase with thrombospondin motifs 5 (207 aa).

The Peptidase M12B domain occupies 1-74 (HAAFTVAHEI…GHGNCLLDLP (74 aa)). Residue H8 participates in Zn(2+) binding. Residue E9 is part of the active site. H12 and H18 together coordinate Zn(2+). 5 disulfide bridges follow: C24–C53, C95–C117, C106–C127, C112–C146, and C140–C151. Residues 83-164 (ELPGQTYDAS…TKKKYYSTSS (82 aa)) enclose the Disintegrin domain. N96 carries an N-linked (GlcNAc...) asparagine glycan. The 41-residue stretch at 165-205 (HGNWGSWGSWGQCSRSCGGGVQFAYRHCNNPAPKNNGRYCT) folds into the TSP type-1 domain. Residues W168 and W171 are each glycosylated (C-linked (Man) tryptophan). Residue S180 is glycosylated (O-linked (Fuc...) serine).

Zn(2+) is required as a cofactor. In terms of processing, the precursor is cleaved by furin and PCSK7 outside of the cell. Glycosylated. Can be O-fucosylated by POFUT2 on a serine or a threonine residue found within the consensus sequence C1-X(2)-(S/T)-C2-G of the TSP type-1 repeat domains where C1 and C2 are the first and second cysteine residue of the repeat, respectively. Fucosylated repeats can then be further glycosylated by the addition of a beta-1,3-glucose residue by the glucosyltransferase, B3GALTL. Fucosylation mediates the efficient secretion of ADAMTS family members. Can also be C-glycosylated with one or two mannose molecules on tryptophan residues within the consensus sequence W-X-X-W of the TPRs, and N-glycosylated. These other glycosylations can also facilitate secretion.

The protein resides in the secreted. It localises to the extracellular space. Its subcellular location is the extracellular matrix. Metalloproteinase that plays an important role in connective tissue organization, development, inflammation and cell migration. Extracellular matrix (ECM) degrading enzyme that shows proteolytic activity toward the hyalectan group of chondroitin sulfate proteoglycans (CSPGs) including ACAN, VCAN, BCAN and NCAN. Cleavage within the hyalectans occurs at Glu-Xaa recognition motifs. Plays a role in embryonic development, including limb and cardiac morphogenesis, and skeletal muscle development through its VCAN remodeling properties. Cleaves VCAN in the pericellular matrix surrounding myoblasts, facilitating myoblast contact and fusion which is required for skeletal muscle development and regeneration. Participates in the development of brown adipose tissue and browning of white adipose tissue. Plays an important role for T-lymphocyte migration from draining lymph nodes following viral infection. The protein is A disintegrin and metalloproteinase with thrombospondin motifs 5 (ADAMTS5) of Bos taurus (Bovine).